A 319-amino-acid chain; its full sequence is ATP-dependent 6-phosphofructokinase (319 aa).

G11 contacts ATP. Residues 21 to 25 and D59 each bind ADP; that span reads RSVVR. ATP contacts are provided by residues 72–73 and 102–105; these read RC and GDGS. D103 lines the Mg(2+) pocket. 125 to 127 is a substrate binding site; it reads TID. D127 functions as the Proton acceptor in the catalytic mechanism. R154 is an ADP binding site. Substrate contacts are provided by residues R162 and 169-171; that span reads MGR. ADP contacts are provided by residues 185–187, R211, and 213–215; these read GAE and KKH. Substrate contacts are provided by residues E222, R243, and 249–252; that span reads HVQR.

It belongs to the phosphofructokinase type A (PFKA) family. ATP-dependent PFK group I subfamily. Prokaryotic clade 'B1' sub-subfamily. In terms of assembly, homotetramer. It depends on Mg(2+) as a cofactor.

It is found in the cytoplasm. It carries out the reaction beta-D-fructose 6-phosphate + ATP = beta-D-fructose 1,6-bisphosphate + ADP + H(+). It participates in carbohydrate degradation; glycolysis; D-glyceraldehyde 3-phosphate and glycerone phosphate from D-glucose: step 3/4. Allosterically activated by ADP and other diphosphonucleosides, and allosterically inhibited by phosphoenolpyruvate. Its function is as follows. Catalyzes the phosphorylation of D-fructose 6-phosphate to fructose 1,6-bisphosphate by ATP, the first committing step of glycolysis. This Geobacillus stearothermophilus (Bacillus stearothermophilus) protein is ATP-dependent 6-phosphofructokinase.